A 159-amino-acid polypeptide reads, in one-letter code: SsrA-binding protein (159 aa).

A disordered region spans residues 138–159 (KRDTLKDKDWQRQKERMMKHSV).

Belongs to the SmpB family.

It is found in the cytoplasm. Functionally, required for rescue of stalled ribosomes mediated by trans-translation. Binds to transfer-messenger RNA (tmRNA), required for stable association of tmRNA with ribosomes. tmRNA and SmpB together mimic tRNA shape, replacing the anticodon stem-loop with SmpB. tmRNA is encoded by the ssrA gene; the 2 termini fold to resemble tRNA(Ala) and it encodes a 'tag peptide', a short internal open reading frame. During trans-translation Ala-aminoacylated tmRNA acts like a tRNA, entering the A-site of stalled ribosomes, displacing the stalled mRNA. The ribosome then switches to translate the ORF on the tmRNA; the nascent peptide is terminated with the 'tag peptide' encoded by the tmRNA and targeted for degradation. The ribosome is freed to recommence translation, which seems to be the essential function of trans-translation. The polypeptide is SsrA-binding protein (Alteromonas mediterranea (strain DSM 17117 / CIP 110805 / LMG 28347 / Deep ecotype)).